The chain runs to 147 residues: Large ribosomal subunit protein bL9 (147 aa).

The protein belongs to the bacterial ribosomal protein bL9 family.

Functionally, binds to the 23S rRNA. The sequence is that of Large ribosomal subunit protein bL9 from Nitratiruptor sp. (strain SB155-2).